We begin with the raw amino-acid sequence, 373 residues long: Carbamoyl phosphate synthase small chain (373 aa).

A CPSase region spans residues 1 to 179 (MSGKAQLVLE…AYIVEPEGPP (179 aa)). L-glutamine is bound by residues serine 47, glycine 230, and glycine 232. In terms of domain architecture, Glutamine amidotransferase type-1 spans 182–373 (TVAALDLGIK…QFIELMEGDR (192 aa)). Residue cysteine 258 is the Nucleophile of the active site. L-glutamine is bound by residues phenylalanine 259, glutamine 262, asparagine 300, glycine 302, and phenylalanine 303. Residues histidine 348 and glutamate 350 contribute to the active site.

This sequence belongs to the CarA family. Composed of two chains; the small (or glutamine) chain promotes the hydrolysis of glutamine to ammonia, which is used by the large (or ammonia) chain to synthesize carbamoyl phosphate. Tetramer of heterodimers (alpha,beta)4.

It catalyses the reaction hydrogencarbonate + L-glutamine + 2 ATP + H2O = carbamoyl phosphate + L-glutamate + 2 ADP + phosphate + 2 H(+). It carries out the reaction L-glutamine + H2O = L-glutamate + NH4(+). It functions in the pathway amino-acid biosynthesis; L-arginine biosynthesis; carbamoyl phosphate from bicarbonate: step 1/1. Its pathway is pyrimidine metabolism; UMP biosynthesis via de novo pathway; (S)-dihydroorotate from bicarbonate: step 1/3. Its function is as follows. Small subunit of the glutamine-dependent carbamoyl phosphate synthetase (CPSase). CPSase catalyzes the formation of carbamoyl phosphate from the ammonia moiety of glutamine, carbonate, and phosphate donated by ATP, constituting the first step of 2 biosynthetic pathways, one leading to arginine and/or urea and the other to pyrimidine nucleotides. The small subunit (glutamine amidotransferase) binds and cleaves glutamine to supply the large subunit with the substrate ammonia. The chain is Carbamoyl phosphate synthase small chain from Mycolicibacterium paratuberculosis (strain ATCC BAA-968 / K-10) (Mycobacterium paratuberculosis).